The sequence spans 129 residues: Histone H2A.J (129 aa).

Positions M1–A22 are disordered. K6 and K10 each carry N6-acetyllysine. A compositionally biased stretch (basic residues) spans Q7–S19. At K10 the chain carries N6-lactoyllysine; alternate. An N5-methylglutamine modification is found at Q105. Position 121 is a phosphothreonine; by DCAF1 (T121).

This sequence belongs to the histone H2A family. As to quaternary structure, the nucleosome is a histone octamer containing two molecules each of H2A, H2B, H3 and H4 assembled in one H3-H4 heterotetramer and two H2A-H2B heterodimers. The octamer wraps approximately 147 bp of DNA. Monoubiquitination of Lys-120 (H2AXK119ub) gives a specific tag for epigenetic transcriptional repression. Following DNA double-strand breaks (DSBs), it is ubiquitinated through 'Lys-63' linkage of ubiquitin moieties. Post-translationally, glutamine methylation at Gln-105 (H2AQ104me) by FBL is specifically dedicated to polymerase I. It is present at 35S ribosomal DNA locus and impairs binding of the FACT complex. In terms of processing, phosphorylation on Ser-2 (H2AS1ph) is enhanced during mitosis. Phosphorylation on Ser-2 by RPS6KA5/MSK1 directly represses transcription. Acetylation of H3 inhibits Ser-2 phosphorylation by RPS6KA5/MSK1. Phosphorylation at Thr-121 (H2AT120ph) by DCAF1 is present in the regulatory region of many tumor suppresor genes and down-regulates their transcription.

The protein resides in the nucleus. It localises to the chromosome. Functionally, core component of nucleosome. Nucleosomes wrap and compact DNA into chromatin, limiting DNA accessibility to the cellular machineries which require DNA as a template. Histones thereby play a central role in transcription regulation, DNA repair, DNA replication and chromosomal stability. DNA accessibility is regulated via a complex set of post-translational modifications of histones, also called histone code, and nucleosome remodeling. The sequence is that of Histone H2A.J from Mus musculus (Mouse).